Consider the following 147-residue polypeptide: Large ribosomal subunit protein uL23A (147 aa).

The span at 1–10 shows a compositional bias: low complexity; the sequence is MAPSAPAKTA. The disordered stretch occupies residues 1 to 29; the sequence is MAPSAPAKTAKALDAKKKVVKGKRTTHRR. Residues 18 to 29 are compositionally biased toward basic residues; the sequence is KVVKGKRTTHRR.

The protein belongs to the universal ribosomal protein uL23 family.

In terms of biological role, this protein binds to a specific region on the 26S rRNA. This is Large ribosomal subunit protein uL23A from Caenorhabditis elegans.